A 228-amino-acid chain; its full sequence is Protein ULTRAPETALA 2 (228 aa).

Residues glutamate 14 to serine 121 enclose the SAND domain.

As to expression, expressed in influorescence, pollen and siliques, with a higher expression in influorescence.

Its subcellular location is the cytoplasm. It localises to the nucleus. Its function is as follows. Putative transcription factor that acts as a key negative regulator of cell accumulation in shoot and floral meristems. Negatively regulates the size of the WUSCHEL (WUS)-expressing organizing center in inflorescence meristems. May act by down-regulating expression of WUS. Can compensate for mutant ULT1 protein when overexpressed. This chain is Protein ULTRAPETALA 2 (ULT2), found in Arabidopsis thaliana (Mouse-ear cress).